The sequence spans 142 residues: Gonadotropin subunit beta-2 (142 aa).

Residues 1 to 23 form the signal peptide; the sequence is MLGLHVGTLISLFLCILLEPVEG. Cystine bridges form between Cys-29–Cys-77, Cys-43–Cys-92, Cys-46–Cys-130, Cys-54–Cys-108, Cys-58–Cys-110, and Cys-113–Cys-120. N-linked (GlcNAc...) asparagine glycosylation occurs at Asn-33.

Belongs to the glycoprotein hormones subunit beta family. Heterodimer of an alpha and a beta chain.

The protein resides in the secreted. Involved in gametogenesis and steroidogenesis. The sequence is that of Gonadotropin subunit beta-2 (cgbb) from Oncorhynchus keta (Chum salmon).